Reading from the N-terminus, the 385-residue chain is tRNA pseudouridine synthase D (385 aa).

D86 acts as the Nucleophile in catalysis. Residues 165 to 305 (GFPNYFGNQR…TRFLQKDIAP (141 aa)) enclose the TRUD domain.

This sequence belongs to the pseudouridine synthase TruD family.

The enzyme catalyses uridine(13) in tRNA = pseudouridine(13) in tRNA. Its function is as follows. Responsible for synthesis of pseudouridine from uracil-13 in transfer RNAs. The protein is tRNA pseudouridine synthase D of Helicobacter hepaticus (strain ATCC 51449 / 3B1).